A 258-amino-acid polypeptide reads, in one-letter code: Type II restriction enzyme HindII (258 aa).

The catalysed reaction is Endonucleolytic cleavage of DNA to give specific double-stranded fragments with terminal 5'-phosphates.. In terms of biological role, a P subtype restriction enzyme that recognizes the double-stranded sequence 5'-GTYRAC-3' and cleaves after Y-3. The protein is Type II restriction enzyme HindII (hindIIR) of Haemophilus influenzae (strain ATCC 51907 / DSM 11121 / KW20 / Rd).